The sequence spans 339 residues: MNTVNASMTVIGAGSYGTALAITLARNGHSVVLWGHNPEQIQKMQRDRCNQAFLPDVAFPDTLLLEADLARALAASRDVLVVVPSHVFGDVLRQLKPHLRPDARIVWATKGLEAETGRLLQDVAREALGEAIPLAVVSGPTFAKELAAGLPTAIALASTDAQFAEDLQQLLHCGKSFRVYSNPDFIGVQLGGAVKNVIAIGAGMSDGIGFGANARTALITRGLTEMTRLGSALGADPSTFMGMAGLGDLVLTCTDNQSRNRRFGIMLGQGKGVQEAQDSIGQVVEGYRNTKEVLALAQRYGVEMPITEQIYQVLYCHKNAREAALSLLGRTRKDEKHSA.

Residues S15, Y16, H36, and K110 each contribute to the NADPH site. Residues K110, G139, and T141 each contribute to the sn-glycerol 3-phosphate site. Residue A143 participates in NADPH binding. 5 residues coordinate sn-glycerol 3-phosphate: K195, D248, S258, R259, and N260. K195 functions as the Proton acceptor in the catalytic mechanism. R259 is an NADPH binding site. NADPH contacts are provided by V283 and E285.

This sequence belongs to the NAD-dependent glycerol-3-phosphate dehydrogenase family.

It localises to the cytoplasm. It catalyses the reaction sn-glycerol 3-phosphate + NAD(+) = dihydroxyacetone phosphate + NADH + H(+). The catalysed reaction is sn-glycerol 3-phosphate + NADP(+) = dihydroxyacetone phosphate + NADPH + H(+). It functions in the pathway membrane lipid metabolism; glycerophospholipid metabolism. In terms of biological role, catalyzes the reduction of the glycolytic intermediate dihydroxyacetone phosphate (DHAP) to sn-glycerol 3-phosphate (G3P), the key precursor for phospholipid synthesis. In Serratia proteamaculans (strain 568), this protein is Glycerol-3-phosphate dehydrogenase [NAD(P)+].